The following is an 862-amino-acid chain: Mismatch repair endonuclease PMS2 (862 aa).

Asn-45, Asp-70, Glu-109, Ala-110, and Leu-111 together coordinate ATP. Basic and acidic residues-rich tracts occupy residues 391 to 401 (DLEKPMVEKQD), 408 to 444 (TGEEKKDVSISRLREAFSLRHTTENKPHSPKTPEPRR), 484 to 495 (PTDRAEVEKDSG), and 528 to 552 (GSQEHVDSQEKAPKTDDSFSDVDCH). Residues 391–552 (DLEKPMVEKQ…DDSFSDVDCH (162 aa)) are disordered. Residue Thr-573 is modified to Phosphothreonine. The short motif at 577–580 (KRFK) is the Nuclear localization signal element. The residue at position 597 (Thr-597) is a Phosphothreonine.

It belongs to the DNA mismatch repair MutL/HexB family. In terms of assembly, heterodimer of PMS2 and MLH1 (MutL alpha); this interaction is required for the stability of both partners. Forms a ternary complex with MutS alpha (MSH2-MSH6) or MutS beta (MSH2-MSH3). Part of the BRCA1-associated genome surveillance complex (BASC), which contains BRCA1, MSH2, MSH6, MLH1, ATM, BLM, PMS2 and the RAD50-MRE11-NBS1 protein complex. This association could be a dynamic process changing throughout the cell cycle and within subnuclear domains. Interacts with MTMR15/FAN1.

It localises to the nucleus. It catalyses the reaction ATP + H2O = ADP + phosphate + H(+). Its function is as follows. Component of the post-replicative DNA mismatch repair system (MMR). Heterodimerizes with MLH1 to form MutL alpha. DNA repair is initiated by MutS alpha (MSH2-MSH6) or MutS beta (MSH2-MSH3) binding to a dsDNA mismatch, then MutL alpha is recruited to the heteroduplex. Assembly of the MutL-MutS-heteroduplex ternary complex in presence of RFC and PCNA is sufficient to activate endonuclease activity of PMS2. It introduces single-strand breaks near the mismatch and thus generates new entry points for the exonuclease EXO1 to degrade the strand containing the mismatch. DNA methylation would prevent cleavage and therefore assure that only the newly mutated DNA strand is going to be corrected. MutL alpha (MLH1-PMS2) interacts physically with the clamp loader subunits of DNA polymerase III, suggesting that it may play a role to recruit the DNA polymerase III to the site of the MMR. Also implicated in DNA damage signaling, a process which induces cell cycle arrest and can lead to apoptosis in case of major DNA damages. Possesses an ATPase activity, but in the absence of gross structural changes, ATP hydrolysis may not be necessary for proficient mismatch repair. This Homo sapiens (Human) protein is Mismatch repair endonuclease PMS2.